A 112-amino-acid chain; its full sequence is Putative RNase TTE0752 (112 aa).

Active-site residues include Arg74 and His79. Positions 74–81 (RDKLIHEY) match the RX(4)HXY motif motif. The residue at position 81 (Tyr81) is an O-di-AMP-tyrosine.

This sequence belongs to the HepT RNase toxin family. As to quaternary structure, homodimer, probably forms a complex with cognate antitoxin TTE0751. Post-translationally, modified by cognate antitoxin TTE0751; probably at least 2 successive AMPylation events occur on Tyr-81.

In terms of biological role, probable toxic component of a putative type VII toxin-antitoxin (TA) system, probably an RNase. Probably neutralized by cognate antitoxin TTE0751. Neutralization may be due to AMPylation by TTE0751. In Caldanaerobacter subterraneus subsp. tengcongensis (strain DSM 15242 / JCM 11007 / NBRC 100824 / MB4) (Thermoanaerobacter tengcongensis), this protein is Putative RNase TTE0752.